Consider the following 194-residue polypeptide: Adenylate kinase (194 aa).

11–16 (GSGKGT) contributes to the ATP binding site. The tract at residues 31–60 (STGELLRAEIKAQTELGQAAAGYINEGHLV) is NMP. Residues threonine 32, arginine 37, 58-60 (HLV), 86-89 (GFPR), and glutamine 93 contribute to the AMP site. The segment at 127–137 (NRGKISGRSDD) is LID. Arginine 128 lines the ATP pocket. Arginine 134 and arginine 145 together coordinate AMP. Position 173 (glycine 173) interacts with ATP.

This sequence belongs to the adenylate kinase family. Monomer.

The protein localises to the cytoplasm. It carries out the reaction AMP + ATP = 2 ADP. It functions in the pathway purine metabolism; AMP biosynthesis via salvage pathway; AMP from ADP: step 1/1. Catalyzes the reversible transfer of the terminal phosphate group between ATP and AMP. Plays an important role in cellular energy homeostasis and in adenine nucleotide metabolism. In Porphyromonas gingivalis (strain ATCC 33277 / DSM 20709 / CIP 103683 / JCM 12257 / NCTC 11834 / 2561), this protein is Adenylate kinase.